Reading from the N-terminus, the 780-residue chain is Protein SAV (780 aa).

ATP contacts are provided by residues Gly253 to Thr260 and Gly528 to Thr535.

The protein belongs to the AAA ATPase family. CDC48 subfamily.

Its function is as follows. Not yet known, shows ATPase activity. This chain is Protein SAV (sav), found in Sulfolobus acidocaldarius (strain ATCC 33909 / DSM 639 / JCM 8929 / NBRC 15157 / NCIMB 11770).